A 544-amino-acid polypeptide reads, in one-letter code: Chaperonin GroEL (544 aa).

ATP-binding positions include 30 to 33 (TLGP), Lys51, 87 to 91 (DGTTT), Gly415, 478 to 480 (NAA), and Asp494.

It belongs to the chaperonin (HSP60) family. As to quaternary structure, forms a cylinder of 14 subunits composed of two heptameric rings stacked back-to-back. Interacts with the co-chaperonin GroES.

Its subcellular location is the cytoplasm. The enzyme catalyses ATP + H2O + a folded polypeptide = ADP + phosphate + an unfolded polypeptide.. Its function is as follows. Together with its co-chaperonin GroES, plays an essential role in assisting protein folding. The GroEL-GroES system forms a nano-cage that allows encapsulation of the non-native substrate proteins and provides a physical environment optimized to promote and accelerate protein folding. The protein is Chaperonin GroEL of Geobacter sulfurreducens (strain ATCC 51573 / DSM 12127 / PCA).